The primary structure comprises 71 residues: Small ribosomal subunit protein bS21 (71 aa).

A disordered region spans residues 47-71 (RENATRAKRHAKRVARENARNTRLY). Positions 60–71 (VARENARNTRLY) are enriched in basic and acidic residues.

It belongs to the bacterial ribosomal protein bS21 family.

The polypeptide is Small ribosomal subunit protein bS21 (Histophilus somni (strain 129Pt) (Haemophilus somnus)).